Here is a 479-residue protein sequence, read N- to C-terminus: UDP-glucose flavonoid 3-O-glucosyltransferase 6 (479 aa).

His-17 acts as the Proton acceptor in catalysis. His-17 is an an anthocyanidin binding site. Asp-121 serves as the catalytic Charge relay. Thr-143, Ala-354, Gln-356, His-371, Trp-374, Asn-375, Ser-376, and Glu-379 together coordinate UDP-alpha-D-glucose. Residue Ala-394 coordinates an anthocyanidin. 2 residues coordinate UDP-alpha-D-glucose: Glu-395 and Gln-396. Positions 454–479 (MSRKALEEDGSSYSSLGRFLDQIQTS) are disordered.

Belongs to the UDP-glycosyltransferase family. Strongly expressed in achenes, with lower expression levels detected in receptacles.

It carries out the reaction a flavonol + UDP-alpha-D-glucose = a flavonol 3-O-beta-D-glucoside + UDP + H(+). Broad spectrum multifunctional glucosyltransferase. Catalyzes the formation of flavonol 3-O-glucosides during fruit ripening. Accepted substrates include several flavonoids, hydroxycoumarins and beta-naphthols. Uses UDP-Glc as a sugar donor, but not UDP-Gal or UDP-GlcUA. May also be involved in detoxification of xenobiotics. In Fragaria ananassa (Strawberry), this protein is UDP-glucose flavonoid 3-O-glucosyltransferase 6.